Consider the following 243-residue polypeptide: Ubiquinone biosynthesis O-methyltransferase (243 aa).

Residues R44, G64, D85, and M129 each coordinate S-adenosyl-L-methionine.

Belongs to the methyltransferase superfamily. UbiG/COQ3 family.

It catalyses the reaction a 3-demethylubiquinol + S-adenosyl-L-methionine = a ubiquinol + S-adenosyl-L-homocysteine + H(+). The catalysed reaction is a 3-(all-trans-polyprenyl)benzene-1,2-diol + S-adenosyl-L-methionine = a 2-methoxy-6-(all-trans-polyprenyl)phenol + S-adenosyl-L-homocysteine + H(+). It participates in cofactor biosynthesis; ubiquinone biosynthesis. Its function is as follows. O-methyltransferase that catalyzes the 2 O-methylation steps in the ubiquinone biosynthetic pathway. This Cronobacter sakazakii (strain ATCC BAA-894) (Enterobacter sakazakii) protein is Ubiquinone biosynthesis O-methyltransferase.